The sequence spans 275 residues: 3-methyl-2-oxobutanoate hydroxymethyltransferase (275 aa).

Residues D44 and D83 each contribute to the Mg(2+) site. Residues 44 to 45 (DS), D83, and K113 each bind 3-methyl-2-oxobutanoate. Position 115 (E115) interacts with Mg(2+). The Proton acceptor role is filled by E182.

It belongs to the PanB family. Homodecamer; pentamer of dimers. Requires Mg(2+) as cofactor.

Its subcellular location is the cytoplasm. It carries out the reaction 3-methyl-2-oxobutanoate + (6R)-5,10-methylene-5,6,7,8-tetrahydrofolate + H2O = 2-dehydropantoate + (6S)-5,6,7,8-tetrahydrofolate. It functions in the pathway cofactor biosynthesis; (R)-pantothenate biosynthesis; (R)-pantoate from 3-methyl-2-oxobutanoate: step 1/2. Catalyzes the reversible reaction in which hydroxymethyl group from 5,10-methylenetetrahydrofolate is transferred onto alpha-ketoisovalerate to form ketopantoate. This is 3-methyl-2-oxobutanoate hydroxymethyltransferase from Clostridium beijerinckii (strain ATCC 51743 / NCIMB 8052) (Clostridium acetobutylicum).